The chain runs to 239 residues: MATLGVNIDHIATIRQARRTVEPDPVAAAVLAELGGADGITVHLREDRRHIQDRDVQLLRQTVRTHLNLEMAATDEMVGIALDIKPDYVTLVPEKREEVTTEGGLDIVGQIARIGEVVSKLQNAAIPVSLFIDAEPAQIEASVKVQAKFIELHTGRYAEATDETSRQQELAFLATGCEQAIKAGLRVNAGHGLTYWNVYPVAALPGMEELNIGHTIISRAALVGIERAVREMKQAIRGE.

Residue N7 coordinates 3-amino-2-oxopropyl phosphate. D9 to H10 contacts 1-deoxy-D-xylulose 5-phosphate. R18 contacts 3-amino-2-oxopropyl phosphate. H43 serves as the catalytic Proton acceptor. 1-deoxy-D-xylulose 5-phosphate-binding residues include R45 and H50. The active-site Proton acceptor is the E70. 1-deoxy-D-xylulose 5-phosphate is bound at residue T100. H191 functions as the Proton donor in the catalytic mechanism. 3-amino-2-oxopropyl phosphate is bound by residues G192 and G213 to H214.

It belongs to the PNP synthase family. Homooctamer; tetramer of dimers.

The protein localises to the cytoplasm. The enzyme catalyses 3-amino-2-oxopropyl phosphate + 1-deoxy-D-xylulose 5-phosphate = pyridoxine 5'-phosphate + phosphate + 2 H2O + H(+). It participates in cofactor biosynthesis; pyridoxine 5'-phosphate biosynthesis; pyridoxine 5'-phosphate from D-erythrose 4-phosphate: step 5/5. Functionally, catalyzes the complicated ring closure reaction between the two acyclic compounds 1-deoxy-D-xylulose-5-phosphate (DXP) and 3-amino-2-oxopropyl phosphate (1-amino-acetone-3-phosphate or AAP) to form pyridoxine 5'-phosphate (PNP) and inorganic phosphate. The polypeptide is Pyridoxine 5'-phosphate synthase (Trichormus variabilis (strain ATCC 29413 / PCC 7937) (Anabaena variabilis)).